Reading from the N-terminus, the 224-residue chain is Tumor protein D52 (224 aa).

Phosphoserine occurs at positions 36 and 40. Residues 62-114 (AATISATETLSEEEQEELRRELAKVEEEIQTLSQVLAAKEKHLAEIKRKLGIN) are a coiled coil. The residue at position 176 (Ser-176) is a Phosphoserine. Residues 187-224 (KVGGTKPAGGDFGEVLNSAANASATTTEPLPEKTQESL) form a disordered region. A compositionally biased stretch (low complexity) spans 203–213 (NSAANASATTT). Position 223 is a phosphoserine (Ser-223).

The protein belongs to the TPD52 family. In terms of assembly, forms a homodimer or heterodimer with other members of the family. All isoforms interact with several 14-3-3 proteins. As to expression, isoform 2 is expressed in colon, breast, prostate, pancreas and kidney tumor cell lines. Isoform 2 is expressed at high levels in kidney, prostate, brain, small intestine and pancreas, at moderate levels in placenta and colon, at low levels in lung, liver and heart, and at very low levels in spleen, thymus, peripheral mononuclear blood cells, testis and ovary.

The polypeptide is Tumor protein D52 (TPD52) (Homo sapiens (Human)).